A 338-amino-acid polypeptide reads, in one-letter code: Cytochrome c biogenesis protein CcsA (338 aa).

A run of 8 helical transmembrane segments spans residues 11 to 31 (VLLD…YWLA), 39 to 59 (LLHE…TGLL), 76 to 96 (ESLF…EAFA), 100 to 120 (LVGV…SLTL), 145 to 165 (VMIL…AFLI), 244 to 264 (LIGL…VWAN), 278 to 295 (TWSL…HARI), and 305 to 325 (ATLA…VNFL).

The protein belongs to the CcmF/CycK/Ccl1/NrfE/CcsA family. As to quaternary structure, may interact with ccs1.

It is found in the cell inner membrane. Its function is as follows. Required during biogenesis of c-type cytochromes (cytochrome c6 and cytochrome f) at the step of heme attachment. This Gloeobacter violaceus (strain ATCC 29082 / PCC 7421) protein is Cytochrome c biogenesis protein CcsA.